The chain runs to 745 residues: AMP deaminase 1 (745 aa).

Residue Thr79 is modified to Phosphothreonine. Ser83 bears the Phosphoserine mark. Residue Tyr214 is modified to Phosphotyrosine. His301 and His303 together coordinate Zn(2+). Substrate-binding positions include His303 and 372-377; that span reads KFNDKY. Ser439 bears the Phosphoserine mark. His570 contacts Zn(2+). Glu573 serves as a coordination point for substrate. Catalysis depends on His592, which acts as the Proton acceptor. Zn(2+) is bound at residue Asp647. Residue 648–651 coordinates substrate; that stretch reads DPMQ.

It belongs to the metallo-dependent hydrolases superfamily. Adenosine and AMP deaminases family. In terms of assembly, homotetramer. The cofactor is Zn(2+).

The enzyme catalyses AMP + H2O + H(+) = IMP + NH4(+). It functions in the pathway purine metabolism; IMP biosynthesis via salvage pathway; IMP from AMP: step 1/1. In terms of biological role, AMP deaminase plays a critical role in energy metabolism. The sequence is that of AMP deaminase 1 from Mus musculus (Mouse).